The primary structure comprises 282 residues: 2-dehydro-3-deoxyphosphooctonate aldolase (282 aa).

It belongs to the KdsA family.

The protein resides in the cytoplasm. The catalysed reaction is D-arabinose 5-phosphate + phosphoenolpyruvate + H2O = 3-deoxy-alpha-D-manno-2-octulosonate-8-phosphate + phosphate. It functions in the pathway carbohydrate biosynthesis; 3-deoxy-D-manno-octulosonate biosynthesis; 3-deoxy-D-manno-octulosonate from D-ribulose 5-phosphate: step 2/3. Its pathway is bacterial outer membrane biogenesis; lipopolysaccharide biosynthesis. The sequence is that of 2-dehydro-3-deoxyphosphooctonate aldolase from Bradyrhizobium diazoefficiens (strain JCM 10833 / BCRC 13528 / IAM 13628 / NBRC 14792 / USDA 110).